A 599-amino-acid chain; its full sequence is MKNIRNFSIIAHIDHGKSTLSDRIIQICGGLSDREMEAQVLDSMDLERERGITIKAQSVTLDYKASDGETYQLNFIDTPGHVDFSYEVSRSLAACEGALLVVDAGQGVEAQTLANCYTAMEMDLEVVPVLNKIDLPAADPERVAEEIEDIVGIDATDAVRCSAKTGVGVQDVLERLVRDIPPPEGDPEGPLQALIIDSWFDNYLGVVSLIRIKNGTLRKGDKVKVMSTGQTYNADRLGIFTPKQVDRTELKCGEVGWLVCAIKDIHGAPVGDTLTLARNPAEKALPGFKKVKPQVYAGLFPVSSDDYEAFRDALGKLSLNDASLFYEPESSSALGFGFRCGFLGLLHMEIIQERLEREYDLDLITTAPTVVYEVETTSREVIYVDSPSKLPAVNNIYELREPIAECHMLLPQAYLGNVITLCVEKRGVQTNMVYHGNQVALTYEIPMAEVVLDFFDRLKSTSRGYASLDYNFKRFQASDMVRVDVLINGERVDALALITHRGNSQNRGRELVEKMKDLIPRQQFDIAIQAAIGTHIIARSTVKQLRKNVLAKCYGGDISRKKKLLQKQKEGKKRMKQIGNVELPQEAFLAILHVGKDNK.

The 183-residue stretch at 2–184 folds into the tr-type G domain; that stretch reads KNIRNFSIIA…RLVRDIPPPE (183 aa). Residues 14-19 and 131-134 each bind GTP; these read DHGKST and NKID.

It belongs to the TRAFAC class translation factor GTPase superfamily. Classic translation factor GTPase family. LepA subfamily.

The protein resides in the cell inner membrane. It catalyses the reaction GTP + H2O = GDP + phosphate + H(+). Required for accurate and efficient protein synthesis under certain stress conditions. May act as a fidelity factor of the translation reaction, by catalyzing a one-codon backward translocation of tRNAs on improperly translocated ribosomes. Back-translocation proceeds from a post-translocation (POST) complex to a pre-translocation (PRE) complex, thus giving elongation factor G a second chance to translocate the tRNAs correctly. Binds to ribosomes in a GTP-dependent manner. The protein is Elongation factor 4 of Escherichia coli (strain UTI89 / UPEC).